We begin with the raw amino-acid sequence, 56 residues long: Large ribosomal subunit protein bL33 (56 aa).

This sequence belongs to the bacterial ribosomal protein bL33 family.

The polypeptide is Large ribosomal subunit protein bL33 (Histophilus somni (strain 129Pt) (Haemophilus somnus)).